A 581-amino-acid polypeptide reads, in one-letter code: Proline--tRNA ligase (581 aa).

The protein belongs to the class-II aminoacyl-tRNA synthetase family. ProS type 1 subfamily. Homodimer.

Its subcellular location is the cytoplasm. The enzyme catalyses tRNA(Pro) + L-proline + ATP = L-prolyl-tRNA(Pro) + AMP + diphosphate. Functionally, catalyzes the attachment of proline to tRNA(Pro) in a two-step reaction: proline is first activated by ATP to form Pro-AMP and then transferred to the acceptor end of tRNA(Pro). As ProRS can inadvertently accommodate and process non-cognate amino acids such as alanine and cysteine, to avoid such errors it has two additional distinct editing activities against alanine. One activity is designated as 'pretransfer' editing and involves the tRNA(Pro)-independent hydrolysis of activated Ala-AMP. The other activity is designated 'posttransfer' editing and involves deacylation of mischarged Ala-tRNA(Pro). The misacylated Cys-tRNA(Pro) is not edited by ProRS. The sequence is that of Proline--tRNA ligase from Kosmotoga olearia (strain ATCC BAA-1733 / DSM 21960 / TBF 19.5.1).